Consider the following 274-residue polypeptide: Probable lipoprotein peptidase YaeF (274 aa).

The first 20 residues, 1 to 20 (MDKPKAYCRLFLPSFLLLSA), serve as a signal peptide directing secretion. Residue cysteine 21 is the site of N-palmitoyl cysteine attachment. A lipid anchor (S-diacylglycerol cysteine) is attached at cysteine 21. Residue cysteine 207 is the Nucleophile of the active site. Histidine 257 acts as the Proton acceptor in catalysis.

Its subcellular location is the cell inner membrane. The polypeptide is Probable lipoprotein peptidase YaeF (yaeF) (Escherichia coli (strain K12)).